A 480-amino-acid polypeptide reads, in one-letter code: Cytochrome b-c1 complex subunit 1, mitochondrial (480 aa).

The N-terminal 34 residues, 1–34, are a transit peptide targeting the mitochondrion; that stretch reads MAASAVCRAACSGTQALLRTCRSPALLRLPALRG. 2 positions are modified to N6-acetyllysine: lysine 111 and lysine 138. Lysine 163 carries the N6-acetyllysine; alternate modification. Lysine 163 carries the N6-succinyllysine; alternate modification. Residue serine 212 is modified to Phosphoserine. Threonine 214 is modified (phosphothreonine).

This sequence belongs to the peptidase M16 family. UQCRC1/QCR1 subfamily. Component of the ubiquinol-cytochrome c oxidoreductase (cytochrome b-c1 complex, complex III, CIII), a multisubunit enzyme composed of 11 subunits. The complex is composed of 3 respiratory subunits cytochrome b, cytochrome c1 and Rieske protein UQCRFS1, 2 core protein subunits UQCRC1/QCR1 and UQCRC2/QCR2, and 6 low-molecular weight protein subunits UQCRH/QCR6, UQCRB/QCR7, UQCRQ/QCR8, UQCR10/QCR9, UQCR11/QCR10 and subunit 9, the cleavage product of Rieske protein UQCRFS1. The complex exists as an obligatory dimer and forms supercomplexes (SCs) in the inner mitochondrial membrane with NADH-ubiquinone oxidoreductase (complex I, CI) and cytochrome c oxidase (complex IV, CIV), resulting in different assemblies (supercomplex SCI(1)III(2)IV(1) and megacomplex MCI(2)III(2)IV(2)). Interacts with UQCC6. Interacts with STMP1.

It is found in the mitochondrion inner membrane. Component of the ubiquinol-cytochrome c oxidoreductase, a multisubunit transmembrane complex that is part of the mitochondrial electron transport chain which drives oxidative phosphorylation. The respiratory chain contains 3 multisubunit complexes succinate dehydrogenase (complex II, CII), ubiquinol-cytochrome c oxidoreductase (cytochrome b-c1 complex, complex III, CIII) and cytochrome c oxidase (complex IV, CIV), that cooperate to transfer electrons derived from NADH and succinate to molecular oxygen, creating an electrochemical gradient over the inner membrane that drives transmembrane transport and the ATP synthase. The cytochrome b-c1 complex catalyzes electron transfer from ubiquinol to cytochrome c, linking this redox reaction to translocation of protons across the mitochondrial inner membrane, with protons being carried across the membrane as hydrogens on the quinol. In the process called Q cycle, 2 protons are consumed from the matrix, 4 protons are released into the intermembrane space and 2 electrons are passed to cytochrome c. The 2 core subunits UQCRC1/QCR1 and UQCRC2/QCR2 are homologous to the 2 mitochondrial-processing peptidase (MPP) subunits beta-MPP and alpha-MPP respectively, and they seem to have preserved their MPP processing properties. May be involved in the in situ processing of UQCRFS1 into the mature Rieske protein and its mitochondrial targeting sequence (MTS)/subunit 9 when incorporated into complex III. Seems to play an important role in the maintenance of proper mitochondrial function in nigral dopaminergic neurons. This chain is Cytochrome b-c1 complex subunit 1, mitochondrial (Uqcrc1), found in Rattus norvegicus (Rat).